We begin with the raw amino-acid sequence, 147 residues long: 3-dehydroquinate dehydratase (147 aa).

The active-site Proton acceptor is tyrosine 23. 3 residues coordinate substrate: asparagine 75, histidine 81, and aspartate 88. Histidine 101 acts as the Proton donor in catalysis. Residues 102-103 (LS) and arginine 112 contribute to the substrate site.

The protein belongs to the type-II 3-dehydroquinase family. In terms of assembly, homododecamer.

It carries out the reaction 3-dehydroquinate = 3-dehydroshikimate + H2O. The protein operates within metabolic intermediate biosynthesis; chorismate biosynthesis; chorismate from D-erythrose 4-phosphate and phosphoenolpyruvate: step 3/7. In terms of biological role, catalyzes a trans-dehydration via an enolate intermediate. In Thioalkalivibrio sulfidiphilus (strain HL-EbGR7), this protein is 3-dehydroquinate dehydratase.